The chain runs to 175 residues: Bifunctional protein PyrR (175 aa).

Residues 40–41 (TR), R85, 102–110 (DDVLYTGRT), R135, and V159 each bind substrate. The PRPP-binding signature appears at 98–110 (VVIIDDVLYTGRT).

It belongs to the purine/pyrimidine phosphoribosyltransferase family. PyrR subfamily. As to quaternary structure, homodimer and homohexamer; in equilibrium.

It catalyses the reaction UMP + diphosphate = 5-phospho-alpha-D-ribose 1-diphosphate + uracil. Regulates transcriptional attenuation of the pyrimidine nucleotide (pyr) operon by binding in a uridine-dependent manner to specific sites on pyr mRNA. This disrupts an antiterminator hairpin in the RNA and favors formation of a downstream transcription terminator, leading to a reduced expression of downstream genes. Functionally, also displays a weak uracil phosphoribosyltransferase activity which is not physiologically significant. This is Bifunctional protein PyrR from Staphylococcus epidermidis (strain ATCC 35984 / DSM 28319 / BCRC 17069 / CCUG 31568 / BM 3577 / RP62A).